We begin with the raw amino-acid sequence, 637 residues long: Phosphomethylpyrimidine synthase (637 aa).

Substrate contacts are provided by residues asparagine 242, methionine 271, tyrosine 300, histidine 336, 356-358 (SRG), 397-400 (DGLR), and glutamate 436. Histidine 440 serves as a coordination point for Zn(2+). Tyrosine 463 provides a ligand contact to substrate. A Zn(2+)-binding site is contributed by histidine 504. Positions 584, 587, and 592 each coordinate [4Fe-4S] cluster.

The protein belongs to the ThiC family. In terms of assembly, homodimer. The cofactor is [4Fe-4S] cluster.

It catalyses the reaction 5-amino-1-(5-phospho-beta-D-ribosyl)imidazole + S-adenosyl-L-methionine = 4-amino-2-methyl-5-(phosphooxymethyl)pyrimidine + CO + 5'-deoxyadenosine + formate + L-methionine + 3 H(+). It functions in the pathway cofactor biosynthesis; thiamine diphosphate biosynthesis. Catalyzes the synthesis of the hydroxymethylpyrimidine phosphate (HMP-P) moiety of thiamine from aminoimidazole ribotide (AIR) in a radical S-adenosyl-L-methionine (SAM)-dependent reaction. The sequence is that of Phosphomethylpyrimidine synthase from Bordetella avium (strain 197N).